The chain runs to 87 residues: UPF0250 protein NT01EI_2946 (87 aa).

It belongs to the UPF0250 family.

In Edwardsiella ictaluri (strain 93-146), this protein is UPF0250 protein NT01EI_2946.